Reading from the N-terminus, the 534-residue chain is MTKYIFVTGGVVSSIGKGIVAASLGRLLKNRGLKVTIQKFDPYINIDPGTMSPYQHGEVYVTDDGAETDLDLGHYERFIDINLNKYSNVTTGKIYSEVLKKERRGEYLGATVQVIPHVTDALKEKIKRAATTTDSDVIITEVGGTVGDIESLPFLEALRQMKADVGSDNVMYIHTTLLPYLKAAGEMKTKPTQHSVKELRGLGIQPNMLVIRTEQPAGQSIKNKLAQFCDVAPEAVIESLDVDHIYQIPLNMQAQNMDQIVCDHLKLETPAADMTEWSAMVDKVMNLEKKVKIALVGKYVELPDAYLSVVEALKHSGYVNDVAIDLKWVNAAEVTEDNIKELVGDADGIIVPGGFGQRGSEGKIEAIRYARENDVPMLGVCLGMQLTCVEFARNVLKLHGANSAELDPKTPFPIIDIMRDQIDIEDMGGTLRLGLYPCKLKAGSRAAAAYNNQEVVQRRHRHRYEFNTKFREQFEAAGFVFSGVSPDNRLMEVVELPEKKFFVAAQYHPELQSRPNHAEELYTAFVTAAVENMK.

Residues 1–267 (MTKYIFVTGG…DQIVCDHLKL (267 aa)) are amidoligase domain. Residue Ser13 coordinates CTP. Ser13 serves as a coordination point for UTP. ATP is bound at residue 14–19 (SIGKGI). Tyr54 is a binding site for L-glutamine. Asp71 contacts ATP. Mg(2+) is bound by residues Asp71 and Glu141. Residues 148–150 (DIE), 188–193 (KTKPTQ), and Lys224 contribute to the CTP site. Residues 188-193 (KTKPTQ) and Lys224 contribute to the UTP site. In terms of domain architecture, Glutamine amidotransferase type-1 spans 292 to 534 (KIALVGKYVE…FVTAAVENMK (243 aa)). Residue Gly354 coordinates L-glutamine. The Nucleophile; for glutamine hydrolysis role is filled by Cys381. Residues 382–385 (LGMQ), Glu405, and Arg463 each bind L-glutamine. Catalysis depends on residues His508 and Glu510.

It belongs to the CTP synthase family. Homotetramer.

It catalyses the reaction UTP + L-glutamine + ATP + H2O = CTP + L-glutamate + ADP + phosphate + 2 H(+). The enzyme catalyses L-glutamine + H2O = L-glutamate + NH4(+). It carries out the reaction UTP + NH4(+) + ATP = CTP + ADP + phosphate + 2 H(+). Its pathway is pyrimidine metabolism; CTP biosynthesis via de novo pathway; CTP from UDP: step 2/2. Its activity is regulated as follows. Allosterically activated by GTP, when glutamine is the substrate; GTP has no effect on the reaction when ammonia is the substrate. The allosteric effector GTP functions by stabilizing the protein conformation that binds the tetrahedral intermediate(s) formed during glutamine hydrolysis. Inhibited by the product CTP, via allosteric rather than competitive inhibition. Functionally, catalyzes the ATP-dependent amination of UTP to CTP with either L-glutamine or ammonia as the source of nitrogen. Regulates intracellular CTP levels through interactions with the four ribonucleotide triphosphates. The chain is CTP synthase from Streptococcus agalactiae serotype Ia (strain ATCC 27591 / A909 / CDC SS700).